We begin with the raw amino-acid sequence, 1297 residues long: DNA-directed RNA polymerase subunit beta' (1297 aa).

Zn(2+)-binding residues include cysteine 60, cysteine 62, cysteine 75, and cysteine 78. Positions 535, 537, and 539 each coordinate Mg(2+). Cysteine 883, cysteine 961, cysteine 968, and cysteine 971 together coordinate Zn(2+).

The protein belongs to the RNA polymerase beta' chain family. In terms of assembly, the RNAP catalytic core consists of 2 alpha, 1 beta, 1 beta' and 1 omega subunit. When a sigma factor is associated with the core the holoenzyme is formed, which can initiate transcription. Requires Mg(2+) as cofactor. It depends on Zn(2+) as a cofactor.

It catalyses the reaction RNA(n) + a ribonucleoside 5'-triphosphate = RNA(n+1) + diphosphate. Its function is as follows. DNA-dependent RNA polymerase catalyzes the transcription of DNA into RNA using the four ribonucleoside triphosphates as substrates. In Salinispora arenicola (strain CNS-205), this protein is DNA-directed RNA polymerase subunit beta'.